A 235-amino-acid polypeptide reads, in one-letter code: Phosphoribosylaminoimidazole-succinocarboxamide synthase (235 aa).

The protein belongs to the SAICAR synthetase family.

The enzyme catalyses 5-amino-1-(5-phospho-D-ribosyl)imidazole-4-carboxylate + L-aspartate + ATP = (2S)-2-[5-amino-1-(5-phospho-beta-D-ribosyl)imidazole-4-carboxamido]succinate + ADP + phosphate + 2 H(+). Its pathway is purine metabolism; IMP biosynthesis via de novo pathway; 5-amino-1-(5-phospho-D-ribosyl)imidazole-4-carboxamide from 5-amino-1-(5-phospho-D-ribosyl)imidazole-4-carboxylate: step 1/2. The chain is Phosphoribosylaminoimidazole-succinocarboxamide synthase from Streptococcus pneumoniae (strain JJA).